The sequence spans 167 residues: 2-C-methyl-D-erythritol 2,4-cyclodiphosphate synthase (167 aa).

2 residues coordinate a divalent metal cation: aspartate 9 and histidine 11. Residues 9-11 (DVH) and 35-36 (HS) each bind 4-CDP-2-C-methyl-D-erythritol 2-phosphate. Histidine 43 is a binding site for a divalent metal cation. Residues 57-59 (DIG), 62-66 (FPDTD), 133-136 (TTTE), phenylalanine 140, and arginine 143 each bind 4-CDP-2-C-methyl-D-erythritol 2-phosphate.

The protein belongs to the IspF family. Homotrimer. A divalent metal cation is required as a cofactor.

The enzyme catalyses 4-CDP-2-C-methyl-D-erythritol 2-phosphate = 2-C-methyl-D-erythritol 2,4-cyclic diphosphate + CMP. It participates in isoprenoid biosynthesis; isopentenyl diphosphate biosynthesis via DXP pathway; isopentenyl diphosphate from 1-deoxy-D-xylulose 5-phosphate: step 4/6. Its function is as follows. Involved in the biosynthesis of isopentenyl diphosphate (IPP) and dimethylallyl diphosphate (DMAPP), two major building blocks of isoprenoid compounds. Catalyzes the conversion of 4-diphosphocytidyl-2-C-methyl-D-erythritol 2-phosphate (CDP-ME2P) to 2-C-methyl-D-erythritol 2,4-cyclodiphosphate (ME-CPP) with a corresponding release of cytidine 5-monophosphate (CMP). The sequence is that of 2-C-methyl-D-erythritol 2,4-cyclodiphosphate synthase from Glaesserella parasuis serovar 5 (strain SH0165) (Haemophilus parasuis).